The primary structure comprises 490 residues: Histone-lysine N-methyltransferase, H3 lysine-9 specific (490 aa).

In terms of domain architecture, Chromo spans 8–69; sequence YEVERIVDEK…RKRRLKGSNS (62 aa). Disordered stretches follow at residues 61–133 and 150–190; these read KRRL…TALT and KKLG…KPRN. The segment covering 102-114 has biased composition (basic and acidic residues); it reads FSRELNVKKENKK. Over residues 115-133 the composition is skewed to polar residues; sequence VFSSQTTKRQSRKQSTALT. Lys127 carries the N6,N6,N6-trimethyllysine; alternate modification. N6-methyllysine; alternate is present on Lys127. A compositionally biased stretch (basic and acidic residues) spans 155-168; it reads TRNEVKEESQKREL. Residues 169–185 show a composition bias toward polar residues; it reads VSNSIKEATSPKTSSIL. In terms of domain architecture, Pre-SET spans 258–325; sequence SGCNCSSLGG…ECPNRVVQRG (68 aa). Cys260, Cys262, Cys268, Cys276, Cys278, Cys307, Cys311, Cys313, and Cys317 together coordinate Zn(2+). An SET domain is found at 328–452; it reads LPLEIFKTKE…PLEELTFDYA (125 aa). Residues 338 to 340, Tyr381, Arg406, and 407 to 410 each bind S-adenosyl-L-methionine; these read KGW and FFNH. Cys412 contacts Zn(2+). Residues 453–472 are autoregulatory loop; sequence GAKDFSPVQSQKSQQNRISK. Lys455 is subject to N6,N6,N6-trimethyllysine; by autocatalysis; alternate. At Lys455 the chain carries N6,N6-dimethyllysine; by autocatalysis; alternate. Lys455 is subject to N6-methyllysine; by autocatalysis; alternate. Residue Lys464 is modified to N6-methyllysine. A Post-SET domain is found at 473–489; that stretch reads LRRQCKCGSANCRGWLF. Positions 477, 479, and 484 each coordinate Zn(2+). 477-478 is a binding site for S-adenosyl-L-methionine; the sequence is CK.

It belongs to the class V-like SAM-binding methyltransferase superfamily. Histone-lysine methyltransferase family. Suvar3-9 subfamily. Component of the Clr4 methyltransferase complex (ClrC) composed of at least clr4, rik1, pcu4, rbx1, raf1 and raf2. The cullin pcu4, rik1, raf1, raf2 and the ring-box protein rbx1 are components of an E3 ubiquitin ligase, whose activity is essential for heterochromatin assembly. Interacts directly with pcu4. Interacts with mlo3. Post-translationally, autocatalytic methylation of specific lysine residues in an internal loop (autoregulatory loop) promote a conformational switch that enhances the H3K9me activity of clr4.

Its subcellular location is the nucleus. It localises to the cytoplasm. The protein localises to the cytoskeleton. The protein resides in the microtubule organizing center. It is found in the spindle pole body. Its subcellular location is the chromosome. The catalysed reaction is L-lysyl(9)-[histone H3] + 3 S-adenosyl-L-methionine = N(6),N(6),N(6)-trimethyl-L-lysyl(9)-[histone H3] + 3 S-adenosyl-L-homocysteine + 3 H(+). The enzyme catalyses N(6)-methyl-L-lysyl(9)-[histone H3] + S-adenosyl-L-methionine = N(6),N(6)-dimethyl-L-lysyl(9)-[histone H3] + S-adenosyl-L-homocysteine + H(+). It catalyses the reaction N(6),N(6)-dimethyl-L-lysyl(9)-[histone H3] + S-adenosyl-L-methionine = N(6),N(6),N(6)-trimethyl-L-lysyl(9)-[histone H3] + S-adenosyl-L-homocysteine + H(+). It carries out the reaction L-lysyl-[protein] + S-adenosyl-L-methionine = N(6)-methyl-L-lysyl-[protein] + S-adenosyl-L-homocysteine + H(+). The catalysed reaction is N(6)-methyl-L-lysyl-[protein] + S-adenosyl-L-methionine = N(6),N(6)-dimethyl-L-lysyl-[protein] + S-adenosyl-L-homocysteine + H(+). The enzyme catalyses N(6),N(6)-dimethyl-L-lysyl-[protein] + S-adenosyl-L-methionine = N(6),N(6),N(6)-trimethyl-L-lysyl-[protein] + S-adenosyl-L-homocysteine + H(+). It catalyses the reaction L-lysyl(9)-[histone H3] + S-adenosyl-L-methionine = N(6)-methyl-L-lysyl(9)-[histone H3] + S-adenosyl-L-homocysteine + H(+). Its activity is regulated as follows. An internal loop (autoregulatory loop) inhibits the catalytic activity of the enzyme by blocking the histone H3K9 substrate-binding pocket. Autocatalytic methylation of specific lysine residues in this loop promote a conformational switch that enhances the H3K9me activity of clr4. Its function is as follows. Histone methyltransferase which contributes to the establishment of heterochromatin by specifically methylating histone H3 to form H3K9me. Part of the Clr4 methyltransferase complex (ClrC). ClrC preferentially ubiquitylates H3K14 and ClrC-mediated H3 ubiquitination promotes clr4 methyltransferase activity. Clr4 functions as a reader and writer of H3K9 methylation. It sets the H3K9me mark and afterwards this H3K9me mark is recognized by the chromodomains of clr4 and swi6/HP1, which then recruit additional clr4 leading to the methylation of neighboring nucleosomes. H3K9me represents a specific tag for epigenetic transcriptional repression by recruiting swi6/HP1 to methylated histones which leads to transcriptional silencing within centromeric heterochromatin, telomeres, ribosomal DNA repeats, and the silent mating-type region. Clr4 methyltransferase activity promotes the assembly of a tripartite complex composed of ClrC and complexes involved in siRNA generation. Apart from H3K9, also methylates non-histone proteins such as mlo3. Interacts with mlo3 to promote the processing of centromeric and antisense RNAs. The polypeptide is Histone-lysine N-methyltransferase, H3 lysine-9 specific (clr4) (Schizosaccharomyces pombe (strain 972 / ATCC 24843) (Fission yeast)).